The chain runs to 161 residues: Glutaredoxin-2, mitochondrial (161 aa).

The transit peptide at 1-19 (MLWRRAALAGTRLVWSRSG) directs the protein to the mitochondrion. Position 20 is a phosphoserine (Ser20). Residues 54–154 (VNQIQETISD…PLVHQCYLKK (101 aa)) form the Glutaredoxin domain. Cys65 provides a ligand contact to [2Fe-2S] cluster. Lys71 contacts glutathione. Cys74 bears the S-glutathionyl cysteine; alternate mark. Cys74 and Cys77 are oxidised to a cystine. Glutathione-binding residues include Gln106 and Val118. Cys150 serves as a coordination point for [2Fe-2S] cluster.

Belongs to the glutaredoxin family. In terms of assembly, monomer; active form. Homodimer; inactive form. The homodimer is probably linked by 1 2Fe-2S cluster.

It localises to the mitochondrion. The 2Fe-2S present in the homodimer leads to inactivation of the enzyme. The 2Fe-2S may serve as a redox sensor: the presence of one-electron oxidants or reductants leading to the loss of the 2Fe-2S cluster, subsequent monomerization and activation of the enzyme. In terms of biological role, glutathione-dependent oxidoreductase that facilitates the maintenance of mitochondrial redox homeostasis upon induction of apoptosis by oxidative stress. Involved in response to hydrogen peroxide and regulation of apoptosis caused by oxidative stress. Acts as a very efficient catalyst of monothiol reactions because of its high affinity for protein glutathione-mixed disulfides. Can receive electrons not only from glutathione (GSH), but also from thioredoxin reductase supporting both monothiol and dithiol reactions. Efficiently catalyzes both glutathionylation and deglutathionylation of mitochondrial complex I, which in turn regulates the superoxide production by the complex. Overexpression decreases the susceptibility to apoptosis and prevents loss of cardiolipin and cytochrome c release. The chain is Glutaredoxin-2, mitochondrial (GLRX2) from Pongo abelii (Sumatran orangutan).